Here is a 1524-residue protein sequence, read N- to C-terminus: DNA polymerase alpha catalytic subunit (1524 aa).

2 disordered regions span residues 1–53 (MSGD…QKPI) and 68–139 (RRRE…KVNP). Positions 20 to 30 (SSRKDTLERLK) are enriched in basic and acidic residues. Over residues 79 to 96 (EDGEGGDLGYLDEGEEED) the composition is skewed to acidic residues. 8 residues coordinate Zn(2+): C1333, C1336, C1375, C1378, C1414, C1419, C1440, and C1446. The segment at 1333 to 1378 (CPSCSTAFNCPSIISSVCASISKKPATPETEESDSTFWLKLHCPKC) adopts a CysA-type zinc-finger fold. Residues 1414–1446 (CEDESCKHTTRSPNFRLLGERERGTVCPNYPNC) carry the CysB motif motif.

This sequence belongs to the DNA polymerase type-B family.

It is found in the nucleus. It catalyses the reaction DNA(n) + a 2'-deoxyribonucleoside 5'-triphosphate = DNA(n+1) + diphosphate. Polymerase alpha in a complex with DNA primase is a replicative polymerase. The sequence is that of DNA polymerase alpha catalytic subunit (POLA) from Arabidopsis thaliana (Mouse-ear cress).